A 504-amino-acid polypeptide reads, in one-letter code: Histidine ammonia-lyase (504 aa).

The 5-imidazolinone (Ala-Gly) cross-link spans 141–143 (ASG). A 2,3-didehydroalanine (Ser) modification is found at Ser-142.

Belongs to the PAL/histidase family. Post-translationally, contains an active site 4-methylidene-imidazol-5-one (MIO), which is formed autocatalytically by cyclization and dehydration of residues Ala-Ser-Gly.

It is found in the cytoplasm. The enzyme catalyses L-histidine = trans-urocanate + NH4(+). It participates in amino-acid degradation; L-histidine degradation into L-glutamate; N-formimidoyl-L-glutamate from L-histidine: step 1/3. The sequence is that of Histidine ammonia-lyase from Geobacillus kaustophilus (strain HTA426).